The chain runs to 229 residues: MDPVQLLSFLLALLLPLGTALDASKQKRDTAFEIYKKLFEVKRKDQINALNNLIELNDVNQQYKIIDIMLKGLFKVLEDSRAILIAAGVQPDGPFPEDEKIKDAYSHTVENSAFFGDVVLRFPKIVHHYFDRNSNWNNLIRWGIGFCNLSGIFDDGPHTQLLGLMSQELGISEKSPDYKNPFKMDNMEFLPNTDAFQKALREEEKRRRKEEKRKEIRKGPRITRSRSEL.

The N-terminal stretch at 1–22 is a signal peptide; the sequence is MDPVQLLSFLLALLLPLGTALD. Positions 192–218 form a coiled coil; sequence NTDAFQKALREEEKRRRKEEKRKEIRK. Positions 201 to 229 are disordered; it reads REEEKRRRKEEKRKEIRKGPRITRSRSEL. Positions 219-229 are enriched in basic residues; sequence GPRITRSRSEL. Positions 226-229 match the Prevents secretion from ER motif; that stretch reads RSEL.

It belongs to the CCDC134 family.

It is found in the endoplasmic reticulum lumen. In terms of biological role, molecular adapter required to prevent protein hyperglycosylation of HSP90B1: during translation, associates with nascent HSP90B1 and the STT3A catalytic component of the OST-A complex and tethers them to a specialized translocon that forms a microenvironment for HSP90B1 folding. In the CCDC134-containing translocon, STT3A associates with the SRT pseudosubstrate motif of HSP90B1, preventing access to facultative glycosylation sites until folding is completed, preventing hyperglycosylation and subsequent degradation of HSP90B1. In Xenopus tropicalis (Western clawed frog), this protein is Coiled-coil domain-containing protein 134 (ccdc134).